The primary structure comprises 162 residues: MERILLCFIVATLVAISMANPRPISIDPPCWTCYYRDSSGNCAFDAIACGGARKRVPKPISIDPPCRTCYYRDSSGNCVYDAFGCGGARKRVPKPISIDPPCRTCYYRDSSGNCVYDAFGCGGARKRVPKPISIDPPCRFCYHRDGSGNCVYDAYGCGAVRK.

An N-terminal signal peptide occupies residues 1–19; it reads MERILLCFIVATLVAISMA. Residues 20–23 constitute a propeptide that is removed on maturation; sequence NPRP. Disulfide bonds link Cys-30–Cys-42 and Cys-33–Cys-49. A propeptide spanning residues 56 to 59 is cleaved from the precursor; it reads VPKP. 2 disulfide bridges follow: Cys-66/Cys-78 and Cys-69/Cys-85. The propeptide occupies 92-95; that stretch reads VPKP. 2 cysteine pairs are disulfide-bonded: Cys-102/Cys-114 and Cys-105/Cys-121. Residues 128–131 constitute a propeptide that is removed on maturation; sequence VPKP. Cystine bridges form between Cys-138–Cys-150 and Cys-141–Cys-157.

It belongs to the sea anemone BBH family.

It is found in the secreted. The protein resides in the nematocyst. In terms of biological role, affects the ASIC3 channel (ACCN3) and produces analgesic effects. It produces a reversible inhibition effect on both the transient and the sustained current of human ASIC3 channels expressed in X.laevis oocytes. It completely blocks the transient component (IC(50)=10 uM) and partially (48%) inhibits the amplitude of the sustained component (IC(50)=1.44 uM). Using in vivo tests in mice, it reverses inflammatory and acid-induced pain. Functionally, does not affect the ASIC3 channel. Does not cause lethality or paralysis of noble crayfish (A.astacus) at a dose of 1 mg/kg. The protein is Precursor protein UG of Urticina grebelnyi (Painted anemone).